The chain runs to 2550 residues: Highly reducing polyketide synthase otaA (2550 aa).

In terms of domain architecture, Ketosynthase family 3 (KS3) spans 9 to 431; it reads SEPLAIIGLA…GTNAHAVVED (423 aa). Residues Cys182, His317, and His355 each act as for beta-ketoacyl synthase activity in the active site. Residues 572–894 form a malonyl-CoA:ACP transacylase (MAT) domain region; the sequence is FVFTGQGANW…KRYETNGSTI (323 aa). Residues 959–1094 are N-terminal hotdog fold; the sequence is HELLGVPVED…GSVRAETGPP (136 aa). Positions 959–1252 are dehydratase (DH) domain; the sequence is HELLGVPVED…DLVQLPANND (294 aa). One can recognise a PKS/mFAS DH domain in the interval 959–1253; it reads HELLGVPVED…LVQLPANNDD (295 aa). A C-terminal hotdog fold region spans residues 1107 to 1253; sequence AEPVDIAQMY…LVQLPANNDD (147 aa). S-adenosyl-L-methionine-binding residues include Ile1420 and Glu1442. Residues 1433–1612 form a methyltransferase (CMeT) domain region; that stretch reads HAQTGIKILE…GLRPRLIIND (180 aa). Residues 1859 to 1919 form an enoyl reductase (ER) (ER) domain region; it reads PDEVKIRIHA…DQVMALRTGP (61 aa). The interval 2166–2345 is ketoreductase (KR) domain; that stretch reads ASYLLIGGFG…PATSVSLGSV (180 aa). The Carrier domain maps to 2454–2531; sequence AAVEVVTRAI…QLAQQAADAS (78 aa). Residue Ser2491 is modified to O-(pantetheine 4'-phosphoryl)serine.

Requires pantetheine 4'-phosphate as cofactor.

The enzyme catalyses 4 malonyl-CoA + acetyl-CoA + 5 NADPH + 9 H(+) = 7-methylmellein + 3 CO2 + 5 NADP(+) + 5 CoA + 4 H2O. It functions in the pathway mycotoxin biosynthesis. Its function is as follows. Highly reducing polyketide synthase; part of the gene cluster that mediates the biosynthesis of ochratoxin A (OTA), a mycotoxin composed of a chlorinated type I polyketide dihydroisocoumarin moiety linked to L-phenylalanine, and demonstrated to have nephrotoxic, immunotoxic, genotoxic, neurotoxic, and teratogenic properties. OtaA catalyzes the condensation of one acetate and 4 malonate units to form the isocoumarin group. The pathway begins with the highly reducing polyketide synthase otaA that catalyzes the formation of the isocoumarin group during the initial stages of biosynthesis, starting from one acetate and 4 malonate units, to originate the characteristic pentaketide skeleton 7-methylmellein (7-MM) of the OTA molecule. The newly identified cyclase otaY might be involved in the polyketide cyclization reaction during the initial steps of the OTA biosynthesis. 7-MM is then oxidized into 7-carboxymellein (also called ochratoxin beta) by the cytochrome P450 monooxygenase otaC. The NRPS encoded by the otaB gene is involved in the linking of phenylalanine to the dihydroisocoumarin ring. The reaction catalyzed by NRPS results in the production of ochratoxin B (OTB), which is the non-chlorinated analog of OTA and which subsequently serves as the substrate of the halogenase otaD for chlorination activity to form the final molecular structure of OTA, containing a chlorine atom in the C-5 position of the molecule. This is Highly reducing polyketide synthase otaA from Aspergillus niger (strain ATCC MYA-4892 / CBS 513.88 / FGSC A1513).